The following is a 901-amino-acid chain: Alanine--tRNA ligase (901 aa).

4 residues coordinate Zn(2+): H600, H604, C704, and H708.

Belongs to the class-II aminoacyl-tRNA synthetase family. Zn(2+) is required as a cofactor.

The protein resides in the cytoplasm. The catalysed reaction is tRNA(Ala) + L-alanine + ATP = L-alanyl-tRNA(Ala) + AMP + diphosphate. Catalyzes the attachment of alanine to tRNA(Ala) in a two-step reaction: alanine is first activated by ATP to form Ala-AMP and then transferred to the acceptor end of tRNA(Ala). Also edits incorrectly charged Ser-tRNA(Ala) and Gly-tRNA(Ala) via its editing domain. The sequence is that of Alanine--tRNA ligase from Ignicoccus hospitalis (strain KIN4/I / DSM 18386 / JCM 14125).